The following is an 81-amino-acid chain: Cytotoxin 1a (81 aa).

A signal peptide spans 1-21 (MKTLLLTLVVVTIVCLDLGYT). 4 disulfide bridges follow: Cys24–Cys42, Cys35–Cys59, Cys63–Cys74, and Cys75–Cys80.

It belongs to the three-finger toxin family. Short-chain subfamily. Type IA cytotoxin sub-subfamily. As to quaternary structure, monomer in solution; Homodimer and oligomer in the presence of negatively charged lipids forming a pore with a size ranging between 20 and 30 Angstroms. As to expression, expressed by the venom gland.

The protein localises to the secreted. It is found in the target cell membrane. In terms of biological role, shows cytolytic activity on many different cells by forming pore in lipid membranes. In vivo, increases heart rate or kills the animal by cardiac arrest. In addition, it binds to heparin with high affinity, interacts with Kv channel-interacting protein 1 (KCNIP1) in a calcium-independent manner, and binds to integrin alpha-V/beta-3 (ITGAV/ITGB3) with moderate affinity. This is Cytotoxin 1a from Naja atra (Chinese cobra).